We begin with the raw amino-acid sequence, 88 residues long: Exodeoxyribonuclease 7 small subunit (88 aa).

It belongs to the XseB family. As to quaternary structure, heterooligomer composed of large and small subunits.

It localises to the cytoplasm. The enzyme catalyses Exonucleolytic cleavage in either 5'- to 3'- or 3'- to 5'-direction to yield nucleoside 5'-phosphates.. In terms of biological role, bidirectionally degrades single-stranded DNA into large acid-insoluble oligonucleotides, which are then degraded further into small acid-soluble oligonucleotides. This is Exodeoxyribonuclease 7 small subunit from Bordetella petrii (strain ATCC BAA-461 / DSM 12804 / CCUG 43448).